We begin with the raw amino-acid sequence, 725 residues long: N-alpha-acetyltransferase 35, NatC auxiliary subunit (725 aa).

The segment at 548–573 (ERIMEEQQKGRSSKKTKKKKKVRPLS) is disordered. A compositionally biased stretch (basic residues) spans 558-571 (RSSKKTKKKKKVRP).

The protein belongs to the MAK10 family. Component of the N-terminal acetyltransferase C (NatC) complex, which is composed of NAA35, NAA38 and NAA30. Expressed in primary spermatocytes, basal epidermis, interstitial fibroblasts of skeletal muscle, and intestinal crypts.

The protein resides in the cytoplasm. Auxillary component of the N-terminal acetyltransferase C (NatC) complex which catalyzes acetylation of N-terminal methionine residues. N-terminal acetylation protects proteins from ubiquitination and degradation by the N-end rule pathway. Involved in regulation of apoptosis and proliferation of smooth muscle cells. The sequence is that of N-alpha-acetyltransferase 35, NatC auxiliary subunit (Naa35) from Rattus norvegicus (Rat).